The sequence spans 52 residues: UPF0391 membrane protein Avin_10980 (52 aa).

Transmembrane regions (helical) follow at residues 4 to 24 and 29 to 49; these read WSIIFLVVAIIAGLLGFGGIA and GIAKILFALFLILFVVSLLFG.

The protein belongs to the UPF0391 family.

It localises to the cell membrane. This is UPF0391 membrane protein Avin_10980 from Azotobacter vinelandii (strain DJ / ATCC BAA-1303).